The following is a 78-amino-acid chain: Large ribosomal subunit protein eL20 (78 aa).

Belongs to the eukaryotic ribosomal protein eL20 family. As to quaternary structure, part of the 50S ribosomal subunit. Binds 23S rRNA.

This chain is Large ribosomal subunit protein eL20, found in Pyrobaculum islandicum (strain DSM 4184 / JCM 9189 / GEO3).